The following is a 258-amino-acid chain: uncharacterized protein (258 aa).

The signal sequence occupies residues Met1 to Ser19.

This is an uncharacterized protein from Escherichia coli (strain K12).